A 487-amino-acid polypeptide reads, in one-letter code: Ribosome biogenesis protein YTM1 (487 aa).

The interval 13–95 is ubiquitin-like (UBL) domain; the sequence is VKVTFTTNEA…ETNLTLQYVR (83 aa). WD repeat units lie at residues 122–161, 168–206, 217–256, 379–419, and 451–487; these read SPAG…LVTA, GHSA…ASGQ, GHRA…SPEA, GHTN…PASG, and GEGA…VVRE. A disordered region spans residues 253–277; it reads SPEADASLLPNAHTSKRRKVASSVT.

This sequence belongs to the WD repeat WDR12/YTM1 family. Component of the NOP7 complex, composed of ERB1, NOP7 and YTM1. The complex is held together by ERB1, which interacts with NOP7 via its N-terminal domain and with YTM1 via a high-affinity interaction between the seven-bladed beta-propeller domains of the 2 proteins. The NOP7 complex associates with the 66S pre-ribosome. Interacts (via UBL domain) with MDN1 (via VWFA/MIDAS domain).

The protein localises to the nucleus. It localises to the nucleolus. It is found in the nucleoplasm. Functionally, component of the NOP7 complex, which is required for maturation of the 25S and 5.8S ribosomal RNAs and formation of the 60S ribosome. This chain is Ribosome biogenesis protein YTM1, found in Podospora anserina (strain S / ATCC MYA-4624 / DSM 980 / FGSC 10383) (Pleurage anserina).